A 138-amino-acid polypeptide reads, in one-letter code: Small ribosomal subunit protein uS11c (138 aa).

This sequence belongs to the universal ribosomal protein uS11 family. In terms of assembly, part of the 30S ribosomal subunit.

The protein localises to the plastid. It localises to the chloroplast. This chain is Small ribosomal subunit protein uS11c, found in Phalaenopsis aphrodite subsp. formosana (Moth orchid).